Reading from the N-terminus, the 158-residue chain is Crossover junction endodeoxyribonuclease RuvC (158 aa).

Residues Asp-7, Glu-66, and Asp-139 contribute to the active site. Mg(2+) contacts are provided by Asp-7, Glu-66, and Asp-139.

This sequence belongs to the RuvC family. Homodimer which binds Holliday junction (HJ) DNA. The HJ becomes 2-fold symmetrical on binding to RuvC with unstacked arms; it has a different conformation from HJ DNA in complex with RuvA. In the full resolvosome a probable DNA-RuvA(4)-RuvB(12)-RuvC(2) complex forms which resolves the HJ. Mg(2+) is required as a cofactor.

The protein localises to the cytoplasm. It carries out the reaction Endonucleolytic cleavage at a junction such as a reciprocal single-stranded crossover between two homologous DNA duplexes (Holliday junction).. Its function is as follows. The RuvA-RuvB-RuvC complex processes Holliday junction (HJ) DNA during genetic recombination and DNA repair. Endonuclease that resolves HJ intermediates. Cleaves cruciform DNA by making single-stranded nicks across the HJ at symmetrical positions within the homologous arms, yielding a 5'-phosphate and a 3'-hydroxyl group; requires a central core of homology in the junction. The consensus cleavage sequence is 5'-(A/T)TT(C/G)-3'. Cleavage occurs on the 3'-side of the TT dinucleotide at the point of strand exchange. HJ branch migration catalyzed by RuvA-RuvB allows RuvC to scan DNA until it finds its consensus sequence, where it cleaves and resolves the cruciform DNA. This chain is Crossover junction endodeoxyribonuclease RuvC, found in Campylobacter hominis (strain ATCC BAA-381 / DSM 21671 / CCUG 45161 / LMG 19568 / NCTC 13146 / CH001A).